A 349-amino-acid polypeptide reads, in one-letter code: ATP phosphoribosyltransferase regulatory subunit (349 aa).

Residues 327-349 (GRGRGVRPRRASARGGRARARPR) are disordered. A compositionally biased stretch (basic residues) spans 330-349 (RGVRPRRASARGGRARARPR).

Belongs to the class-II aminoacyl-tRNA synthetase family. HisZ subfamily. As to quaternary structure, heteromultimer composed of HisG and HisZ subunits.

The protein localises to the cytoplasm. It functions in the pathway amino-acid biosynthesis; L-histidine biosynthesis; L-histidine from 5-phospho-alpha-D-ribose 1-diphosphate: step 1/9. Its function is as follows. Required for the first step of histidine biosynthesis. May allow the feedback regulation of ATP phosphoribosyltransferase activity by histidine. The protein is ATP phosphoribosyltransferase regulatory subunit of Anaeromyxobacter dehalogenans (strain 2CP-1 / ATCC BAA-258).